The following is a 757-amino-acid chain: MSENSSDSDSSCGWTVISHEGSDIEMLNSVTPTDSCEPAPECSSLEQEELQALQIEQGESSQNGTVLMEETAYPALEETSSTIEAEEQKIPEDSIYIGTASDDSDIVTLEPPKLEEIGNQEVVIVEEAQSSEDFNMGSSSSSQYTFCQPETVFSSQPSDDESSSDETSNQPSPAFRRRRARKKTVSASESEDRLVAEQETEPSKELSKRQFSSGLNKCVILALVIAISMGFGHFYGTIQIQKRQQLVRKIHEDELNDMKDYLSQCQQEQESFIDYKSLKENLARCWTLTEAEKMSFETQKTNLATENQYLRVSLEKEEKALSSLQEELNKLREQIRILEDKGTSTELVKENQKLKQHLEEEKQKKHSFLSQRETLLTEAKMLKRELERERLVTTALRGELQQLSGSQLHGKSDSPNVYTEKKEIAILRERLTELERKLTFEQQRSDLWERLYVEAKDQNGKQGTDGKKKGGRGSHRAKNKSKETFLGSVKETFDAMKNSTKEFVRHHKEKIKQAKEAVKENLKKFSDSVKSTFRHFKDTTKNIFDEKGNKRFGATKEAAEKPRTVFSDYLHPQYKAPTENHHNRGPTMQNDGRKEKPVHFKEFRKNTNSKKCSPGHDCRENSHSFRKACSGVFDCAQQESMSLFNTVVNPIRMDEFRQIIQRYMLKELDTFCHWNELDQFINKFFLNGVFIHDQKLFTDFVNDVKDYLRNMKEYEVDNDGVFEKLDEYIYRHFFGHTFSPPYGPRSVYIKPCHYSSL.

The Cytoplasmic segment spans residues Met-1–Lys-217. Residues Met-1 to Gln-308 are interaction with MCF2L and SRC. The disordered stretch occupies residues Val-152–Ser-207. Over residues Phe-175–Thr-184 the composition is skewed to basic residues. Ser-186 is modified (phosphoserine). Residues Ser-190–Ser-207 show a composition bias toward basic and acidic residues. Residues Cys-218–Ile-238 traverse the membrane as a helical; Signal-anchor for type II membrane protein segment. Residues Gln-239–Leu-757 are Lumenal-facing. Coiled-coil stretches lie at residues Arg-248–Phe-272 and Glu-306–Arg-450. Residues Gln-458–Lys-468 show a composition bias toward basic and acidic residues. A disordered region spans residues Gln-458 to Glu-483. Over residues Lys-469 to Asn-479 the composition is skewed to basic residues. Residues Val-504 to Lys-530 adopt a coiled-coil conformation.

It belongs to the CCPG1 family. As to quaternary structure, interacts with MCF2L. May interact with MCF2, ARHGEF1, BCR, VAV1 and FGD1, but not with TIAM1. Interacts with GTP-bound CDC42 and SRC.

The protein resides in the cytoplasmic granule membrane. Acts as an assembly platform for Rho protein signaling complexes. Limits guanine nucleotide exchange activity of MCF2L toward RHOA, which results in an inhibition of both its transcriptional activation ability and its transforming activity. Does not inhibit activity of MCF2L toward CDC42, or activity of MCF2 toward either RHOA or CDC42. May be involved in cell cycle regulation. The sequence is that of Cell cycle progression protein 1 (CCPG1) from Homo sapiens (Human).